The primary structure comprises 108 residues: Protein FATTY ACID EXPORT 7 (108 aa).

3 helical membrane-spanning segments follow: residues 32 to 52 (ISLV…TELP), 55 to 75 (PVLA…MMGS), and 85 to 105 (PAGL…HGLI).

Belongs to the TMEM14 family.

The protein resides in the membrane. Functionally, may be involved in free fatty acids export. This Arabidopsis thaliana (Mouse-ear cress) protein is Protein FATTY ACID EXPORT 7.